The following is a 116-amino-acid chain: uncharacterized protein (116 aa).

The helical transmembrane segment at 5–23 (LLAVETWYMLILSFRFLFF) threads the bilayer.

Its subcellular location is the membrane. This is an uncharacterized protein from Saccharomyces cerevisiae (strain ATCC 204508 / S288c) (Baker's yeast).